An 888-amino-acid chain; its full sequence is Alanine--tRNA ligase (888 aa).

4 residues coordinate Zn(2+): histidine 573, histidine 577, cysteine 676, and histidine 680.

The protein belongs to the class-II aminoacyl-tRNA synthetase family. Zn(2+) serves as cofactor.

Its subcellular location is the cytoplasm. It catalyses the reaction tRNA(Ala) + L-alanine + ATP = L-alanyl-tRNA(Ala) + AMP + diphosphate. Catalyzes the attachment of alanine to tRNA(Ala) in a two-step reaction: alanine is first activated by ATP to form Ala-AMP and then transferred to the acceptor end of tRNA(Ala). Also edits incorrectly charged Ser-tRNA(Ala) and Gly-tRNA(Ala) via its editing domain. The protein is Alanine--tRNA ligase of Corynebacterium glutamicum (strain R).